The primary structure comprises 354 residues: Rhodopsin (354 aa).

The Extracellular portion of the chain corresponds to 1–36; that stretch reads MNGTEGPNFYVPMSNKTGIVRSPFEYPQYYLAEPWK. N-linked (GlcNAc...) asparagine glycosylation is found at Asn2 and Asn15. Residues 37–61 form a helical membrane-spanning segment; it reads YSVLAAYMFLLILLGLPINFMTLYV. The Cytoplasmic segment spans residues 62-73; the sequence is TIQHKKLRTPLN. Residues 74–96 form a helical membrane-spanning segment; the sequence is YILLNLAFANHFMVLCGFTITMY. The Extracellular segment spans residues 97 to 110; the sequence is TSLHGYFVFGQTGC. Cys110 and Cys187 are oxidised to a cystine. Residues 111–133 traverse the membrane as a helical segment; it reads YFEGFFATLGGEIALWSLVVLAI. Positions 134–136 match the 'Ionic lock' involved in activated form stabilization motif; it reads ERY. At 134-152 the chain is on the cytoplasmic side; that stretch reads ERYIVVCKPMSNFRFGENH. The helical transmembrane segment at 153–173 threads the bilayer; sequence AMMGVAFTWIMALACAVPPLF. Topologically, residues 174–202 are extracellular; the sequence is GWSRYIPEGMQCSCGVDYYTLKPEVNNES. Residues 203–224 form a helical membrane-spanning segment; it reads FVIYMFVVHFLIPLIIISFCYG. Residues 225–252 are Cytoplasmic-facing; the sequence is RLVCTVKEAAAQQQESATTQKAEKEVTR. The chain crosses the membrane as a helical span at residues 253 to 274; sequence MVVIMVIFFLICWVPYAYVAFY. Over 275–286 the chain is Extracellular; sequence IFTHQGSEFGPI. A helical transmembrane segment spans residues 287-308; the sequence is FMTVPAFFAKSSAIYNPVIYIM. Position 296 is an N6-(retinylidene)lysine (Lys296). The Cytoplasmic portion of the chain corresponds to 309–354; the sequence is LNKQFRNCMITTLCCGKNPFGDEDASSAATSKTEATSVSTSQVSPA. 2 S-palmitoyl cysteine lipidation sites follow: Cys322 and Cys323. Positions 331-354 are disordered; the sequence is EDASSAATSKTEATSVSTSQVSPA. Over residues 334–354 the composition is skewed to low complexity; sequence SSAATSKTEATSVSTSQVSPA.

This sequence belongs to the G-protein coupled receptor 1 family. Opsin subfamily. Contains one covalently linked retinal chromophore. Upon light absorption, the covalently bound 11-cis-retinal is converted to all-trans-retinal. After hydrolysis of the Schiff base and release of the covalently bound all-trans-retinal, active rhodopsin is regenerated by binding of a fresh molecule of 11-cis-retinal. In terms of tissue distribution, retina. Localized in the ventral part of the retina.

It is found in the membrane. Its subcellular location is the cell projection. The protein localises to the cilium. The protein resides in the photoreceptor outer segment. In terms of biological role, photoreceptor required for image-forming vision at low light intensity. Required for photoreceptor cell viability after birth. May use a mixture of retinal and 3-dehydroretinal as visual pigment. Light-induced isomerization of 11-cis to all-trans retinal triggers a conformational change that activates signaling via G-proteins. Subsequent receptor phosphorylation mediates displacement of the bound G-protein alpha subunit by arrestin and terminates signaling. The sequence is that of Rhodopsin (RHO) from Aquarana catesbeiana (American bullfrog).